The sequence spans 190 residues: UPF0316 protein Mboo_0605 (190 aa).

3 helical membrane passes run 3–23 (IGTFWSVAAIPLLILVARIAE), 41–61 (LAAYVGIVKTGIWLISTGLVL), and 67–87 (FWNLFAYLAGYGMGTVLGMEI).

The protein belongs to the UPF0316 family.

It is found in the cell membrane. This is UPF0316 protein Mboo_0605 from Methanoregula boonei (strain DSM 21154 / JCM 14090 / 6A8).